A 495-amino-acid polypeptide reads, in one-letter code: Keratin, type II cuticular 87 (495 aa).

The segment at 1-111 (MSCFSSRLGA…PNAQCVKHEE (111 aa)) is head. One can recognise an IF rod domain in the interval 111–422 (EKEQIKCLNS…RLLEGEEQRL (312 aa)). A coil 1A region spans residues 112 to 146 (KEQIKCLNSKFAAFIDKVRFLEQQNKLLETKWQFY). The interval 147–156 (QNRKCCESNM) is linker 1. Residues 157–257 (EPLFEGYIEA…YEEETRLLHS (101 aa)) are coil 1B. A linker 12 region spans residues 258–274 (HISDTSVVVKMDNSRDL). Residues 275 to 418 (NMDCVVAEIK…ITYRRLLEGE (144 aa)) are coil 2. Residues 419 to 494 (EQRLCEGVGS…TCGSSRSVRF (76 aa)) are tail.

It belongs to the intermediate filament family. In terms of assembly, heterotetramer of two type I and two type II keratins.

This is Keratin, type II cuticular 87 from Mus musculus (Mouse).